Reading from the N-terminus, the 380-residue chain is Glucose-1-phosphate adenylyltransferase (380 aa).

Residues Y99, G164, 179–180 (EK), and S190 contribute to the alpha-D-glucose 1-phosphate site.

Belongs to the bacterial/plant glucose-1-phosphate adenylyltransferase family. As to quaternary structure, homotetramer.

The catalysed reaction is alpha-D-glucose 1-phosphate + ATP + H(+) = ADP-alpha-D-glucose + diphosphate. It functions in the pathway glycan biosynthesis; glycogen biosynthesis. Involved in the biosynthesis of ADP-glucose, a building block required for the elongation reactions to produce glycogen. Catalyzes the reaction between ATP and alpha-D-glucose 1-phosphate (G1P) to produce pyrophosphate and ADP-Glc. The sequence is that of Glucose-1-phosphate adenylyltransferase from Bacillus subtilis (strain 168).